A 150-amino-acid chain; its full sequence is UPF0756 membrane protein HAPS_1649 (150 aa).

The next 5 helical transmembrane spans lie at 1–21, 27–46, 52–72, 82–102, and 123–143; these read MSLQFNSVALLLVALILLGIF, VTISAAVLLIMQQTLLSKYV, YGIKIGIIILTIGVLAPLVSG, LINWKMIVAIIAGIVVAWLGG, and IIGVAFLKGVPVGPLIAAGIL.

This sequence belongs to the UPF0756 family.

The protein resides in the cell membrane. In Glaesserella parasuis serovar 5 (strain SH0165) (Haemophilus parasuis), this protein is UPF0756 membrane protein HAPS_1649.